The following is a 281-amino-acid chain: 2,3,4,5-tetrahydropyridine-2,6-dicarboxylate N-succinyltransferase (281 aa).

2 residues coordinate substrate: Arg-108 and Asp-145.

It belongs to the transferase hexapeptide repeat family. In terms of assembly, homotrimer.

The protein localises to the cytoplasm. The catalysed reaction is (S)-2,3,4,5-tetrahydrodipicolinate + succinyl-CoA + H2O = (S)-2-succinylamino-6-oxoheptanedioate + CoA. Its pathway is amino-acid biosynthesis; L-lysine biosynthesis via DAP pathway; LL-2,6-diaminopimelate from (S)-tetrahydrodipicolinate (succinylase route): step 1/3. This is 2,3,4,5-tetrahydropyridine-2,6-dicarboxylate N-succinyltransferase from Rhodopseudomonas palustris (strain BisB5).